The following is a 96-amino-acid chain: UPF0251 protein Spea_3639 (96 aa).

This sequence belongs to the UPF0251 family.

This chain is UPF0251 protein Spea_3639, found in Shewanella pealeana (strain ATCC 700345 / ANG-SQ1).